A 415-amino-acid polypeptide reads, in one-letter code: tRNA(Ile2) 2-agmatinylcytidine synthetase TiaS (415 aa).

The protein belongs to the TiaS family.

It localises to the cytoplasm. It catalyses the reaction cytidine(34) in tRNA(Ile2) + agmatine + ATP + H2O = 2-agmatinylcytidine(34) in tRNA(Ile2) + AMP + 2 phosphate + 2 H(+). Its function is as follows. ATP-dependent agmatine transferase that catalyzes the formation of 2-agmatinylcytidine (agm2C) at the wobble position (C34) of tRNA(Ile2), converting the codon specificity from AUG to AUA. The polypeptide is tRNA(Ile2) 2-agmatinylcytidine synthetase TiaS (Methanocorpusculum labreanum (strain ATCC 43576 / DSM 4855 / Z)).